The sequence spans 123 residues: Large ribosomal subunit protein uL29 (123 aa).

The protein belongs to the universal ribosomal protein uL29 family.

The chain is Large ribosomal subunit protein uL29 (RPL35) from Euphorbia esula (Leafy spurge).